Reading from the N-terminus, the 405-residue chain is Argininosuccinate synthase (405 aa).

ATP is bound at residue A12 to S20. Y92 and S97 together coordinate L-citrulline. An ATP-binding site is contributed by G122. L-aspartate is bound by residues T124, N128, and D129. N128 contacts L-citrulline. Residues R132, S181, S190, E266, and Y278 each coordinate L-citrulline.

The protein belongs to the argininosuccinate synthase family. Type 1 subfamily. As to quaternary structure, homotetramer.

It is found in the cytoplasm. It catalyses the reaction L-citrulline + L-aspartate + ATP = 2-(N(omega)-L-arginino)succinate + AMP + diphosphate + H(+). It functions in the pathway amino-acid biosynthesis; L-arginine biosynthesis; L-arginine from L-ornithine and carbamoyl phosphate: step 2/3. The chain is Argininosuccinate synthase from Cronobacter sakazakii (strain ATCC BAA-894) (Enterobacter sakazakii).